We begin with the raw amino-acid sequence, 32 residues long: Fibrinolytic enzyme 2 (32 aa).

The region spanning 1–32 (ISGTSMSCPHVAGRAYVLDTSLRVYLLDTGLR) is the Peptidase S8 domain. Ser5 (charge relay system) is an active-site residue.

This sequence belongs to the peptidase S8 family.

With respect to regulation, inhibited by PMSF. Not inhibited by benzamidine, aprotinin, SBTI, EDTA, EGTA, 2-mercaptoethanol, iodoacetic acid or pepstatin A. Its function is as follows. Serine protease. Has fibrinolytic and fibrinogenolytic but no plasminogenolytic activity. Cleaves after Arg and Lys residues. Cleaves fibrinogen alpha chain, beta chain and gamma chain in that order. The polypeptide is Fibrinolytic enzyme 2 (Hediste japonica (Polychaete worm)).